The following is a 429-amino-acid chain: Adenylosuccinate synthetase (429 aa).

Residues 12 to 18 and 40 to 42 contribute to the GTP site; these read GDEGKGK and GHT. The Proton acceptor role is filled by D13. Mg(2+) is bound by residues D13 and G40. Residues 13 to 16, 38 to 41, T128, R142, Q223, T238, and R302 each bind IMP; these read DEGK and NAGH. The active-site Proton donor is the H41. 298 to 304 contributes to the substrate binding site; sequence VNTGRPR. GTP-binding positions include R304, 330-332, and 412-414; these read KLD and GVG.

It belongs to the adenylosuccinate synthetase family. As to quaternary structure, homodimer. It depends on Mg(2+) as a cofactor.

Its subcellular location is the cytoplasm. It catalyses the reaction IMP + L-aspartate + GTP = N(6)-(1,2-dicarboxyethyl)-AMP + GDP + phosphate + 2 H(+). The protein operates within purine metabolism; AMP biosynthesis via de novo pathway; AMP from IMP: step 1/2. In terms of biological role, plays an important role in the de novo pathway of purine nucleotide biosynthesis. Catalyzes the first committed step in the biosynthesis of AMP from IMP. The polypeptide is Adenylosuccinate synthetase (Paenarthrobacter aurescens (strain TC1)).